The primary structure comprises 32 residues: Acyclotide phyb-M (32 aa).

A Pyrrolidone carboxylic acid modification is found at Q1. 3 disulfide bridges follow: C5/C21, C9/C23, and C14/C28.

Contains 3 disulfide bonds. As to expression, expressed in midvein, lamina and periphery of leaves (at protein level).

Functionally, probably participates in a plant defense mechanism. This chain is Acyclotide phyb-M, found in Petunia hybrida (Petunia).